The chain runs to 286 residues: Probable ketoamine kinase EAE_16955 (286 aa).

An ATP-binding site is contributed by 92–94 (EYL). The active-site Proton acceptor is Asp-194.

The protein belongs to the fructosamine kinase family.

In terms of biological role, ketoamine kinase that phosphorylates ketoamines on the third carbon of the sugar moiety to generate ketoamine 3-phosphate. This is Probable ketoamine kinase EAE_16955 from Klebsiella aerogenes (strain ATCC 13048 / DSM 30053 / CCUG 1429 / JCM 1235 / KCTC 2190 / NBRC 13534 / NCIMB 10102 / NCTC 10006 / CDC 819-56) (Enterobacter aerogenes).